Here is a 1017-residue protein sequence, read N- to C-terminus: MIQNSAGYRSLNTASPMTVQVKNQKKICARCNKLVIPDSQRTKTTLKALGKYYHESCFTCQDCQKPLKPKYFPYQVDKTSESILLCQYDYFRRHNLLCHVCDTPLRGLYYTAFGYRYDEEHFSCTICATPCGVKKCFMYGNQLYCKYHFLKYFSKRCKGCEFPISDQYIEFPKGEEIHCWHPECYGIHKYWHVNLAAETVGLQYLPKLEYNPNSGDKDINPTAYELDKQMQAFNFILSKTWSVLYRFEEEAASCISDMFQYLTSNDQLKGIESTGLLVLKIDCLFRGLDTLNLSTNKSMPVNSDQECIENNAMAASKYSKFPKNLSTKIMIYLQLLRKLGTENKNETITISSFMSVITGLAHFLKLLTRFGLYTALENNKLTHSVNPLLRFLREVEKNELFENNPFQYIKTPVNATDSCAGCNKYIQEECIQFYEHRWHIACFTCSSCHKNINPRSLTDPTFNKEKKKILCSHCSIDDPASVPGFKFVTKLAQLIFLLKIALVKSRTVMLKSKASNKVGRNSLQSTMLKEQTYIRTLNDIKRLRSRRESVRVTHNKQQARKSVILETAETDLNDPTKQGDSKNLVIQTDDPSSSQQVSTRENVFSNTKTLTLDDISRIVAAEQARELRPNAFAHFKKLKETDDETSNVVPKKSGVYYSELSTMELSMIRAISLSLLAGKQLISKTDPNYTSLVSMVFSNEKQVTGSFWNRMKIMMSMEPKKPITKTVFGAPLDVLCEKWGVDSDLGVGPVKIRIPIIIDELISSLRQMDMSVEGIFRKNGNIRRLRELTANIDSNPTEAPDFSKENAIQLSALLKKFIRELPQPILSTDLYELWIKAAKIDLEDEKQRVILLIYSLLPTYNRNLLEALLSFLHWTSSFSYIENEMGSKMDIHNLSTVITPNILYLRHKEISNDNVPDEPESGLVDSFAQNKGENYFLAIEIVDYLITHNEEMAMVPKFLMNLLKDVQLQKLDNYESINHFISTVMQSKTIDYSECDIKTPVTVKDSTTTVIQGEINK.

N-acetylmethionine is present on Met1. 2 LIM zinc-binding domains span residues 28–88 and 98–148; these read CARC…LCQY and CHVC…CKYH. An LIM zinc-binding 3; truncated domain is found at 155–184; the sequence is KRCKGCEFPISDQYIEFPKGEEIHCWHPEC. Residues 419-474 form the LIM zinc-binding 4 domain; that stretch reads CAGCNKYIQEECIQFYEHRWHIACFTCSSCHKNINPRSLTDPTFNKEKKKILCSHC. Phosphoserine is present on Ser562. A disordered region spans residues 570 to 602; that stretch reads TDLNDPTKQGDSKNLVIQTDDPSSSQQVSTREN. The segment covering 584-602 has biased composition (polar residues); the sequence is LVIQTDDPSSSQQVSTREN. A Rho-GAP domain is found at 730–953; sequence APLDVLCEKW…YLITHNEEMA (224 aa).

Interacts with CDC42, RHO1 and RHO2.

It localises to the cytoplasm. It is found in the bud. Its subcellular location is the bud neck. Acts in signal transduction. Activates CDC42, RHO1 and RHO2. Negatively regulates 1,3-beta-glucan synthesis. May be responsible for the down-regulation of CDC42 during mating. This Saccharomyces cerevisiae (strain ATCC 204508 / S288c) (Baker's yeast) protein is Rho-GTPase-activating protein LRG1 (LRG1).